The chain runs to 395 residues: Xylose isomerase (395 aa).

Residues H54 and D57 contribute to the active site. Residues E181, E217, H220, D245, D255, D257, and D293 each coordinate Mg(2+).

It belongs to the xylose isomerase family. As to quaternary structure, homotetramer. It depends on Mg(2+) as a cofactor.

Its subcellular location is the cytoplasm. It catalyses the reaction alpha-D-xylose = alpha-D-xylulofuranose. The sequence is that of Xylose isomerase from Arthrobacter sp. (strain FB24).